The following is a 335-amino-acid chain: Nucleoid-associated protein YejK (335 aa).

This sequence belongs to the YejK family.

The protein localises to the cytoplasm. It localises to the nucleoid. The chain is Nucleoid-associated protein YejK from Shigella sonnei (strain Ss046).